We begin with the raw amino-acid sequence, 198 residues long: Segregation and condensation protein B (198 aa).

This sequence belongs to the ScpB family. As to quaternary structure, homodimer. Homodimerization may be required to stabilize the binding of ScpA to the Smc head domains. Component of a cohesin-like complex composed of ScpA, ScpB and the Smc homodimer, in which ScpA and ScpB bind to the head domain of Smc. The presence of the three proteins is required for the association of the complex with DNA.

The protein resides in the cytoplasm. In terms of biological role, participates in chromosomal partition during cell division. May act via the formation of a condensin-like complex containing Smc and ScpA that pull DNA away from mid-cell into both cell halves. In Acetivibrio thermocellus (strain ATCC 27405 / DSM 1237 / JCM 9322 / NBRC 103400 / NCIMB 10682 / NRRL B-4536 / VPI 7372) (Clostridium thermocellum), this protein is Segregation and condensation protein B.